The following is a 74-amino-acid chain: MSAQRFLFLLVVTSLIAASLAAPKDVQLTKRGTPCWCGKTVGIYWFALYSCPGGHGYTGHCGQFMGVCCYPADP.

The signal sequence occupies residues 1 to 21; sequence MSAQRFLFLLVVTSLIAASLA. A propeptide spanning residues 22-29 is cleaved from the precursor; the sequence is APKDVQLT. Intrachain disulfides connect C35/C68, C37/C61, and C51/C69.

Belongs to the sea anemone type 3 (BDS) potassium channel toxin family.

It localises to the secreted. Its subcellular location is the nematocyst. Its function is as follows. Potently and selectively inhibits voltage-gated potassium channels Kv11/KCNH/ERG. Acts as a gating-modifier toxin that shifts the voltage-dependence of ERG activation in the positive direction and suppresses its current amplitudes elicited by strong depolarizing pulses that maximally activate the channels. The sequence is that of U-actitoxin-Bgr3a from Bunodosoma granuliferum (Red warty sea anemone).